The chain runs to 856 residues: Serine/threonine-protein phosphatase 6 regulatory subunit 1 (856 aa).

The segment at 10 to 403 (SSHLDTLLEK…VFNNFLHAQV (394 aa)) is interaction with PPP6C. Ser232 is subject to Phosphoserine. Thr524 carries the post-translational modification Phosphothreonine. 3 positions are modified to phosphoserine: Ser529, Ser530, and Ser531. Positions 621-630 (DDEEEEEEEG) are enriched in acidic residues. 2 disordered regions span residues 621–770 (DDEE…KVAE) and 792–856 (RSAP…SGSQ). Phosphoserine is present on residues Ser633 and Ser636. Polar residues predominate over residues 644 to 656 (QGSQPVRASQASQ). Residues 667–683 (DSEEEDEEEDEEEDEGA) are compositionally biased toward acidic residues. Residues Ser698 and Ser739 each carry the phosphoserine modification. Residues 794 to 809 (APSSLDSATRDPSTSV) are compositionally biased toward polar residues. A Phosphoserine modification is found at Ser826. A compositionally biased stretch (low complexity) spans 842–856 (PNGSTPGGPISSGSQ).

Belongs to the SAPS family. In terms of assembly, protein phosphatase 6 (PP6) holoenzyme is proposed to be a heterotrimeric complex formed of the catalytic subunit, a SAPS domain-containing subunit (PP6R) and an ankyrin repeat-domain containing regulatory subunit (ARS). Interacts with PPP6C and NFKBIE. Interacts with ANKRD28, ANKRD44 and ANKRD52. In terms of tissue distribution, ubiquitous with highest expression in lung, spleen and bladder.

Its subcellular location is the cytoplasm. Its function is as follows. Regulatory subunit of protein phosphatase 6 (PP6). May function as a scaffolding PP6 subunit. Involved in the PP6-mediated dephosphorylation of NFKBIE opposing its degradation in response to TNF-alpha. In Mus musculus (Mouse), this protein is Serine/threonine-protein phosphatase 6 regulatory subunit 1 (Ppp6r1).